The chain runs to 297 residues: Protoheme IX farnesyltransferase (297 aa).

Transmembrane regions (helical) follow at residues 26–46 (VTQLAVFCAVIGMFLATPGMV), 48–68 (YPVLFGGIVGIWLLAGAAFAV), 96–116 (LHIIIFSIILGSLGMIILWNF), 120–140 (LTMWLTLATFVGYAVIYTWLL), 147–167 (NIVIGGLSGAMPPALGWAAVT), 174–194 (AWHLVLIIFVWTPPHFWALAL), 218–238 (LLNIVLYTLILIAATMLPYIY), 245–265 (YLISAIILGLLFLAYVVALFI), and 276–296 (FRFSITYLSLLFAALLVDHYF).

The protein belongs to the UbiA prenyltransferase family. Protoheme IX farnesyltransferase subfamily.

Its subcellular location is the cell inner membrane. It carries out the reaction heme b + (2E,6E)-farnesyl diphosphate + H2O = Fe(II)-heme o + diphosphate. It functions in the pathway porphyrin-containing compound metabolism; heme O biosynthesis; heme O from protoheme: step 1/1. In terms of biological role, converts heme B (protoheme IX) to heme O by substitution of the vinyl group on carbon 2 of heme B porphyrin ring with a hydroxyethyl farnesyl side group. The sequence is that of Protoheme IX farnesyltransferase from Polynucleobacter necessarius subsp. necessarius (strain STIR1).